The sequence spans 185 residues: uncharacterized protein (185 aa).

2 consecutive transmembrane segments (helical) span residues 1-21 (MMKFLLILIFLASFSFSLTPE) and 111-131 (FLWIITGIFTTLTASVIAFAW).

To A.aeolicus aq_1900.

It is found in the cell membrane. This is an uncharacterized protein from Aquifex aeolicus (strain VF5).